Reading from the N-terminus, the 549-residue chain is Pyrophosphate--fructose 6-phosphate 1-phosphotransferase (549 aa).

A diphosphate-binding site is contributed by glycine 78. Aspartate 172 is a Mg(2+) binding site. Residues 200-202, 239-240, 247-249, glutamate 308, and 421-424 contribute to the substrate site; these read TID, KY, MGR, and YEGR. Aspartate 202 (proton acceptor) is an active-site residue.

Belongs to the phosphofructokinase type A (PFKA) family. PPi-dependent PFK group II subfamily. Clade 'Long' sub-subfamily. Homodimer. Requires Mg(2+) as cofactor.

It localises to the cytoplasm. The catalysed reaction is beta-D-fructose 6-phosphate + diphosphate = beta-D-fructose 1,6-bisphosphate + phosphate + H(+). It participates in carbohydrate degradation; glycolysis; D-glyceraldehyde 3-phosphate and glycerone phosphate from D-glucose: step 3/4. Non-allosteric. Catalyzes the phosphorylation of D-fructose 6-phosphate, the first committing step of glycolysis. Uses inorganic phosphate (PPi) as phosphoryl donor instead of ATP like common ATP-dependent phosphofructokinases (ATP-PFKs), which renders the reaction reversible, and can thus function both in glycolysis and gluconeogenesis. Consistently, PPi-PFK can replace the enzymes of both the forward (ATP-PFK) and reverse (fructose-bisphosphatase (FBPase)) reactions. The sequence is that of Pyrophosphate--fructose 6-phosphate 1-phosphotransferase from Porphyromonas gingivalis (Bacteroides gingivalis).